The sequence spans 88 residues: Phosphoribosyl-ATP pyrophosphatase (88 aa).

It belongs to the PRA-PH family.

The protein resides in the cytoplasm. The enzyme catalyses 1-(5-phospho-beta-D-ribosyl)-ATP + H2O = 1-(5-phospho-beta-D-ribosyl)-5'-AMP + diphosphate + H(+). The protein operates within amino-acid biosynthesis; L-histidine biosynthesis; L-histidine from 5-phospho-alpha-D-ribose 1-diphosphate: step 2/9. The protein is Phosphoribosyl-ATP pyrophosphatase of Cutibacterium acnes (strain DSM 16379 / KPA171202) (Propionibacterium acnes).